Consider the following 418-residue polypeptide: Serine--tRNA ligase (418 aa).

231-233 (TAE) serves as a coordination point for L-serine. ATP is bound at residue 262–264 (RRE). E285 is a binding site for L-serine. 349 to 352 (EISS) is an ATP binding site. S384 is a binding site for L-serine.

It belongs to the class-II aminoacyl-tRNA synthetase family. Type-1 seryl-tRNA synthetase subfamily. Homodimer. The tRNA molecule binds across the dimer.

The protein localises to the cytoplasm. The enzyme catalyses tRNA(Ser) + L-serine + ATP = L-seryl-tRNA(Ser) + AMP + diphosphate + H(+). It carries out the reaction tRNA(Sec) + L-serine + ATP = L-seryl-tRNA(Sec) + AMP + diphosphate + H(+). It participates in aminoacyl-tRNA biosynthesis; selenocysteinyl-tRNA(Sec) biosynthesis; L-seryl-tRNA(Sec) from L-serine and tRNA(Sec): step 1/1. Its function is as follows. Catalyzes the attachment of serine to tRNA(Ser). Is also able to aminoacylate tRNA(Sec) with serine, to form the misacylated tRNA L-seryl-tRNA(Sec), which will be further converted into selenocysteinyl-tRNA(Sec). The sequence is that of Serine--tRNA ligase from Coprothermobacter proteolyticus (strain ATCC 35245 / DSM 5265 / OCM 4 / BT).